The primary structure comprises 374 residues: Glutamate 5-kinase (374 aa).

ATP is bound at residue Lys16. 3 residues coordinate substrate: Ser56, Asp143, and Asn155. ATP is bound at residue 175 to 176 (TD). Residues 282–360 (RGRVVLDAGA…SEIEAVLGYV (79 aa)) form the PUA domain.

Belongs to the glutamate 5-kinase family.

The protein localises to the cytoplasm. The catalysed reaction is L-glutamate + ATP = L-glutamyl 5-phosphate + ADP. It participates in amino-acid biosynthesis; L-proline biosynthesis; L-glutamate 5-semialdehyde from L-glutamate: step 1/2. Functionally, catalyzes the transfer of a phosphate group to glutamate to form L-glutamate 5-phosphate. This is Glutamate 5-kinase from Ralstonia pickettii (strain 12J).